The following is a 239-amino-acid chain: DNA repair protein RecO (239 aa).

It belongs to the RecO family.

Involved in DNA repair and RecF pathway recombination. The chain is DNA repair protein RecO from Cereibacter sphaeroides (strain KD131 / KCTC 12085) (Rhodobacter sphaeroides).